Consider the following 475-residue polypeptide: 3-hydroxyadipyl-CoA dehydrogenase (475 aa).

It belongs to the 3-hydroxyacyl-CoA dehydrogenase family. As to quaternary structure, homotrimer.

It catalyses the reaction (3S)-3-hydroxyadipyl-CoA + NAD(+) = 3-oxoadipyl-CoA + NADH + H(+). It participates in aromatic compound metabolism; phenylacetate degradation. Its function is as follows. Catalyzes the oxidation of 3-hydroxyadipyl-CoA to yield 3-oxoadipyl-CoA. The protein is 3-hydroxyadipyl-CoA dehydrogenase (paaH) of Escherichia coli (strain K12).